Consider the following 225-residue polypeptide: Ribonuclease HII (225 aa).

The RNase H type-2 domain maps to 2-210 (GIVVGVDEAG…VRKLGGPWRS (209 aa)). Residues aspartate 8, glutamate 9, and aspartate 107 each contribute to the a divalent metal cation site.

Belongs to the RNase HII family. It depends on Mn(2+) as a cofactor. Mg(2+) is required as a cofactor.

It localises to the cytoplasm. It catalyses the reaction Endonucleolytic cleavage to 5'-phosphomonoester.. Its function is as follows. Endonuclease that specifically degrades the RNA of RNA-DNA hybrids. This Aeropyrum pernix (strain ATCC 700893 / DSM 11879 / JCM 9820 / NBRC 100138 / K1) protein is Ribonuclease HII (rnhB).